We begin with the raw amino-acid sequence, 811 residues long: Abnormal pharyngeal pumping eat-20 (811 aa).

The signal sequence occupies residues 1–20 (MTTFCRVLLIFGIYVAVSCA). Over 21 to 749 (QSVEDDVFHF…GKQSSAVASW (729 aa)) the chain is Extracellular. N-linked (GlcNAc...) asparagine glycans are attached at residues Asn90, Asn171, and Asn232. 3 EGF-like domains span residues 220 to 257 (PPSPCANHECHNNGTCLVSQEGAAMCLCRNGFTGDRCE), 258 to 293 (LDVCSAVPCQNGGVCRSNNGIAYCECPPAFSGLLCE), and 301 to 335 (AAPICNPECSNGQCVLKDGQPQCECRQGFTGANCN). 9 disulfide bridges follow: Cys224-Cys235, Cys229-Cys245, Cys247-Cys256, Cys261-Cys272, Cys266-Cys281, Cys283-Cys292, Cys305-Cys314, Cys309-Cys323, and Cys325-Cys334. The N-linked (GlcNAc...) asparagine glycan is linked to Asn371. 3 disordered regions span residues 544-579 (FVSPNMPDENEEEEEDETTDETEETFPTPSTMQVAT), 592-659 (FPTT…AIST), and 690-739 (PHPQ…HTSS). Over residues 551–567 (DENEEEEEDETTDETEE) the composition is skewed to acidic residues. A compositionally biased stretch (polar residues) spans 570-579 (PTPSTMQVAT). A compositionally biased stretch (acidic residues) spans 597 to 612 (DMEETDEEEDMTEEVT). Residues 626–639 (PSSTTFTTEAPTTT) show a composition bias toward low complexity. Acidic residues-rich tracts occupy residues 640–655 (MEEEETTEQEEIESEE) and 705–717 (IESEEERTTESNE). The chain crosses the membrane as a helical span at residues 750-770 (IIATIALIVLGSLLLATSLFV). Residues 771-811 (LRYIRQSRKLHGKYNPAREEHNLSAAYAMPMSHIAKEERLI) are Cytoplasmic-facing.

The protein resides in the membrane. Its function is as follows. Regulates pharyngeal pumping during feeding. The polypeptide is Abnormal pharyngeal pumping eat-20 (eat-20) (Caenorhabditis briggsae).